The primary structure comprises 277 residues: Bis(5'-nucleosyl)-tetraphosphatase, symmetrical (277 aa).

It belongs to the Ap4A hydrolase family.

It catalyses the reaction P(1),P(4)-bis(5'-adenosyl) tetraphosphate + H2O = 2 ADP + 2 H(+). In terms of biological role, hydrolyzes diadenosine 5',5'''-P1,P4-tetraphosphate to yield ADP. The sequence is that of Bis(5'-nucleosyl)-tetraphosphatase, symmetrical from Bordetella bronchiseptica (strain ATCC BAA-588 / NCTC 13252 / RB50) (Alcaligenes bronchisepticus).